Consider the following 482-residue polypeptide: GPI mannosyltransferase 3 (482 aa).

A helical membrane pass occupies residues 12–32 (LFAFIFIFRLANSFAIETFFQ). N-linked (GlcNAc...) asparagine glycosylation is present at Asn-80. 4 helical membrane-spanning segments follow: residues 114 to 134 (KLAWITLMLSLFNPFNWYVIT), 137 to 155 (FSNNLEMVFTVLALRFWPW), 175 to 195 (IIRPTNILIWIPLGIWLLISI), and 199 to 219 (LKWVALSFLEVVLILLINTAL). N-linked (GlcNAc...) asparagine glycosylation is present at Asn-242. 3 consecutive transmembrane segments (helical) span residues 252-272 (WHFYIFQAIPLMLMLYLPLMI), 274-294 (GLKKNILLLTGLFYIIGFSLI), and 324-344 (FVLIGILLNICIGLFFTNVHE).

This sequence belongs to the glycosyltransferase 22 family. PIGB subfamily.

The protein localises to the endoplasmic reticulum membrane. It participates in glycolipid biosynthesis; glycosylphosphatidylinositol-anchor biosynthesis. In terms of biological role, mannosyltransferase involved in glycosylphosphatidylinositol-anchor biosynthesis. Transfers the third mannose to Man2-GlcN-acyl-PI during GPI precursor assembly. This Candida albicans (strain SC5314 / ATCC MYA-2876) (Yeast) protein is GPI mannosyltransferase 3 (GPI10).